The chain runs to 914 residues: Penicillin-binding protein 1A/1B (914 aa).

The interval 1-29 (MSDQFNSREARRKANSKSSPSPKKGKKRK) is disordered. Residues 1–37 (MSDQFNSREARRKANSKSSPSPKKGKKRKKGGLFKKT) lie on the Cytoplasmic side of the membrane. A helical; Signal-anchor for type II membrane protein transmembrane segment spans residues 38–58 (LFTLLILFVLGVVGGAVTFAV). Topologically, residues 59–914 (MVSDAPSLDE…TNSSSIEKTN (856 aa)) are extracellular. The tract at residues 77–246 (STIYDKNGKE…TAYNPVKNPD (170 aa)) is transglycosylase. Catalysis depends on glutamate 115, which acts as the Proton donor; for transglycosylase activity. The tract at residues 329 to 662 (TKAQDKLDEL…PDSVVEATVE (334 aa)) is transpeptidase. The Acyl-ester intermediate; for transpeptidase activity role is filled by serine 390. One can recognise a Fibronectin type-III domain in the interval 708-795 (KLSGLNVKYD…SYEVPKAEDD (88 aa)). The interval 773–914 (TAVSDDGKST…TNSSSIEKTN (142 aa)) is disordered. Basic and acidic residues predominate over residues 798–828 (KKDQQQTDDEKQDDEKTQDDTQTDDSQKDDG). Residues 829 to 840 (QTDQDQTDDSTN) show a composition bias toward acidic residues. Low complexity-rich tracts occupy residues 848–892 (NTNT…GSDT) and 900–914 (SNKT…EKTN).

The protein in the N-terminal section; belongs to the glycosyltransferase 51 family. It in the C-terminal section; belongs to the transpeptidase family. Post-translationally, the product expressed from the translation of the ponA gene appears as two bands on a gel (1A and 1B), but the specific amino acid sequence of each protein is unknown. In terms of processing, the N-terminus is blocked.

Its subcellular location is the cell membrane. The protein resides in the forespore inner membrane. The catalysed reaction is [GlcNAc-(1-&gt;4)-Mur2Ac(oyl-L-Ala-gamma-D-Glu-L-Lys-D-Ala-D-Ala)](n)-di-trans,octa-cis-undecaprenyl diphosphate + beta-D-GlcNAc-(1-&gt;4)-Mur2Ac(oyl-L-Ala-gamma-D-Glu-L-Lys-D-Ala-D-Ala)-di-trans,octa-cis-undecaprenyl diphosphate = [GlcNAc-(1-&gt;4)-Mur2Ac(oyl-L-Ala-gamma-D-Glu-L-Lys-D-Ala-D-Ala)](n+1)-di-trans,octa-cis-undecaprenyl diphosphate + di-trans,octa-cis-undecaprenyl diphosphate + H(+). It catalyses the reaction Preferential cleavage: (Ac)2-L-Lys-D-Ala-|-D-Ala. Also transpeptidation of peptidyl-alanyl moieties that are N-acyl substituents of D-alanine.. It functions in the pathway cell wall biogenesis; peptidoglycan biosynthesis. Its function is as follows. Cell wall formation. Synthesis of cross-linked peptidoglycan from the lipid intermediates. The enzyme has a penicillin-insensitive transglycosylase N-terminal domain (formation of linear glycan strands) and a penicillin-sensitive transpeptidase C-terminal domain (cross-linking of the peptide subunits). Required for vegetative growth. Has a partially redundant function with PBP-2A (pbpA) during spore outgrowth. This chain is Penicillin-binding protein 1A/1B (ponA), found in Bacillus subtilis (strain 168).